A 195-amino-acid chain; its full sequence is uncharacterized protein (195 aa).

2 helical membrane passes run 13–32 (VIGL…FLVA) and 42–64 (LSNS…TILV).

The protein localises to the cell membrane. This is an uncharacterized protein from Archaeoglobus fulgidus (strain ATCC 49558 / DSM 4304 / JCM 9628 / NBRC 100126 / VC-16).